The sequence spans 172 residues: Protein YdeJ (172 aa).

It belongs to the CinA family.

Does not have nicotinamide-nucleotide (NMN) amidohydrolase activity. In Escherichia coli (strain K12), this protein is Protein YdeJ (ydeJ).